Here is an 89-residue protein sequence, read N- to C-terminus: Large ribosomal subunit protein bL27 (89 aa).

A disordered region spans residues 1–21; it reads MAHKKAGGSSRNGRDSAGRRL.

The protein belongs to the bacterial ribosomal protein bL27 family.

The polypeptide is Large ribosomal subunit protein bL27 (Roseobacter denitrificans (strain ATCC 33942 / OCh 114) (Erythrobacter sp. (strain OCh 114))).